The primary structure comprises 2382 residues: Nonribosomal peptide synthetase chyA (2382 aa).

An adenylation 1 region spans residues 204 to 607 (QKCATQPESI…LGRKDHQVKI (404 aa)). Residues 745–821 (TPTTQNQRIL…DMASVLVKDH (77 aa)) enclose the Carrier 1 domain. S782 is modified (O-(pantetheine 4'-phosphoryl)serine). The condensation 1 stretch occupies residues 857-1269 (EDVYPCTHMQ…LVPPEDMATL (413 aa)). The segment at 1294–1687 (GQPDTLAIHS…VGRKDDQVKL (394 aa)) is adenylation 2. In terms of domain architecture, Carrier 2 spans 1833 to 1909 (VPVSIHGRKV…GLSLKCATEN (77 aa)). S1870 bears the O-(pantetheine 4'-phosphoryl)serine mark. Residues 1967 to 2373 (MTLHNFYSRY…FSDVIESLAS (407 aa)) form a condensation 2 region.

The protein belongs to the NRP synthetase family.

It participates in pigment biosynthesis. In terms of biological role, nonribosomal peptide synthetase; part of the gene cluster that mediates the biosynthesis of the yellow pigment chrysogine. the NRPS chyA mediates the condensation of anthranilic acid and alanine into the intermediate 2-(2-aminopropanamido)benzoic acid. The remainder of the pathway is highly branched yielding at least 13 chrysogine-related compounds. The malonyl transferase chyE converts 2-(2-aminopropanamido)benzoic acid and 2-(2-aminopropanamido)benzamidine into 2-(2-(2-carboxyacetamido)propanamido)benzoic acid and 3-((1-((2-carbamoylphenyl)amino)-1-oxopropan-2-yl)amino)-3-oxopropanoic acid, respectively. ChyD is an amidase, being responsible for the amidation of the carboxylic acid moiety of 2-(2-aminopropanamido)benzoic acid, 2-(2-(2-carboxyacetamido)propanamido)benzoic acid and 2-(2-((4-amino-1-carboxy-4-oxobutyl)amino)propanamido)benzoic acid. ChyC is involved in the same reactions as ChyD, but plays a more minor role in the amidation reactions compared to chyD. The oxidoreductases chyH and chyM are involved in oxidation reactions that form N-pyruvoylanthranilamide from 2-(2-aminopropanamido)benzamidine and (1-((2-carbamoylphenyl)amino)-1-oxopropan-2-yl)glutamine, respectively. N-pyruvoylanthranilamide is further converted via two further branches in the pathway, yielding chrysogine and additional chrysogine-related coumpounds. Chrysogine is likely formed by a spontaneous ring closure from N-pyruvoylanthranilamide. The protein is Nonribosomal peptide synthetase chyA of Penicillium rubens (strain ATCC 28089 / DSM 1075 / NRRL 1951 / Wisconsin 54-1255) (Penicillium chrysogenum).